The following is a 155-amino-acid chain: MPHSNISRAPRQHLTERVLQAKTAKNLTWAGLAEGTGLSVVYVTAALLGQHPLPQAVAEVVAERLGLDRDAVAELQTIPLRGNVEDVSSDPTIYRFHEMVQVYGTTLKALVHEQFGDGIISAINFKLDIKKVDDPEGGERAVITLDGKFLPYKPF.

Catalysis depends on residues Arg-95, Glu-98, and Ser-121.

This sequence belongs to the cyanase family.

The catalysed reaction is cyanate + hydrogencarbonate + 3 H(+) = NH4(+) + 2 CO2. Functionally, catalyzes the reaction of cyanate with bicarbonate to produce ammonia and carbon dioxide. This chain is Cyanate hydratase, found in Pseudomonas syringae pv. syringae (strain B728a).